A 159-amino-acid chain; its full sequence is SsrA-binding protein (159 aa).

Residues 137-159 form a disordered region; sequence DKRETEKQRDWSREKGRLLKERG.

The protein belongs to the SmpB family.

The protein resides in the cytoplasm. In terms of biological role, required for rescue of stalled ribosomes mediated by trans-translation. Binds to transfer-messenger RNA (tmRNA), required for stable association of tmRNA with ribosomes. tmRNA and SmpB together mimic tRNA shape, replacing the anticodon stem-loop with SmpB. tmRNA is encoded by the ssrA gene; the 2 termini fold to resemble tRNA(Ala) and it encodes a 'tag peptide', a short internal open reading frame. During trans-translation Ala-aminoacylated tmRNA acts like a tRNA, entering the A-site of stalled ribosomes, displacing the stalled mRNA. The ribosome then switches to translate the ORF on the tmRNA; the nascent peptide is terminated with the 'tag peptide' encoded by the tmRNA and targeted for degradation. The ribosome is freed to recommence translation, which seems to be the essential function of trans-translation. The sequence is that of SsrA-binding protein from Mesorhizobium japonicum (strain LMG 29417 / CECT 9101 / MAFF 303099) (Mesorhizobium loti (strain MAFF 303099)).